A 418-amino-acid polypeptide reads, in one-letter code: Phospho-N-acetylmuramoyl-pentapeptide-transferase (418 aa).

10 helical membrane-spanning segments follow: residues 22 to 42 (YISF…VLIG), 72 to 92 (TPTM…LLLA), 95 to 115 (SNIY…LGLI), 135 to 155 (IIAQ…SPNI), 208 to 228 (AATW…VSNG), 244 to 264 (AIIG…GFAA), 277 to 297 (LTVF…HNAF), 302 to 322 (FMGD…AIII), 326 to 346 (LLLP…MIQV), and 395 to 415 (KIVV…VVTL).

It belongs to the glycosyltransferase 4 family. MraY subfamily. Mg(2+) is required as a cofactor.

Its subcellular location is the cell inner membrane. The enzyme catalyses UDP-N-acetyl-alpha-D-muramoyl-L-alanyl-gamma-D-glutamyl-meso-2,6-diaminopimeloyl-D-alanyl-D-alanine + di-trans,octa-cis-undecaprenyl phosphate = di-trans,octa-cis-undecaprenyl diphospho-N-acetyl-alpha-D-muramoyl-L-alanyl-D-glutamyl-meso-2,6-diaminopimeloyl-D-alanyl-D-alanine + UMP. It participates in cell wall biogenesis; peptidoglycan biosynthesis. Functionally, catalyzes the initial step of the lipid cycle reactions in the biosynthesis of the cell wall peptidoglycan: transfers peptidoglycan precursor phospho-MurNAc-pentapeptide from UDP-MurNAc-pentapeptide onto the lipid carrier undecaprenyl phosphate, yielding undecaprenyl-pyrophosphoryl-MurNAc-pentapeptide, known as lipid I. This Azobacteroides pseudotrichonymphae genomovar. CFP2 protein is Phospho-N-acetylmuramoyl-pentapeptide-transferase.